We begin with the raw amino-acid sequence, 143 residues long: Hemoglobin subunit alpha-1 (143 aa).

At Ser2 the chain carries N-acetylserine. Residues 2-143 (SLSTKDKETV…VSLALAEKYR (142 aa)) form the Globin domain. His60 provides a ligand contact to O2. His89 is a heme b binding site.

Belongs to the globin family. Hb1 is a heterotetramer of two alpha-1 chains and two beta-1 chains. As to expression, red blood cells.

Functionally, involved in oxygen transport from gills to the various peripheral tissues. This is Hemoglobin subunit alpha-1 from Liparis tunicatus (Kelp snailfish).